We begin with the raw amino-acid sequence, 337 residues long: Anthranilate phosphoribosyltransferase (337 aa).

Residues G81, 84–85, T89, 91–94, 109–117, and T121 each bind 5-phospho-alpha-D-ribose 1-diphosphate; these read GD, NIST, and KHGNRALSS. G81 lines the anthranilate pocket. S93 lines the Mg(2+) pocket. N112 provides a ligand contact to anthranilate. R167 is an anthranilate binding site. D225 and E226 together coordinate Mg(2+).

Belongs to the anthranilate phosphoribosyltransferase family. As to quaternary structure, homodimer. Mg(2+) is required as a cofactor.

The catalysed reaction is N-(5-phospho-beta-D-ribosyl)anthranilate + diphosphate = 5-phospho-alpha-D-ribose 1-diphosphate + anthranilate. It functions in the pathway amino-acid biosynthesis; L-tryptophan biosynthesis; L-tryptophan from chorismate: step 2/5. Its function is as follows. Catalyzes the transfer of the phosphoribosyl group of 5-phosphorylribose-1-pyrophosphate (PRPP) to anthranilate to yield N-(5'-phosphoribosyl)-anthranilate (PRA). This chain is Anthranilate phosphoribosyltransferase, found in Rhizobium meliloti (strain 1021) (Ensifer meliloti).